The following is a 389-amino-acid chain: MGLKAVHFGAGNIGRGFVAEFLHKSGYEVVFCDVMDSIIQKLQTTPSYKVIQVGAEGTSEDTITNYRAINSKTHEADVIEEIRTADVVTCSVGPNILKFIAPVIAKGIDGRSNDATPIAVIACENAIGATDTLANHIKGDHTPQERLDDHHQRARYANSAIDRIVPAQDPDAGLDVKLEKFYEWVVDRTPFSDHEPPAIQGIKWVDDLIPYIERKLFTVNTGHAAAAYHGYYHQKATVYDALQDPNILKEVHAALEETSRLIVGKHGIEAQEQKDYVDKIITRIGNPHLEDAVERVGRAPLRKLSRKERFIAPAAELAEEGKDFTALLDAAEMAFRFQNVEGDEESKELAKIMSENSAEQVVEKVCGLQSDHPLFPHVVAVVKKVQADE.

5–16 (AVHFGAGNIGRG) serves as a coordination point for NAD(+). Lys215 is a catalytic residue.

It belongs to the mannitol dehydrogenase family. As to quaternary structure, monomer.

It catalyses the reaction D-mannitol 1-phosphate + NAD(+) = beta-D-fructose 6-phosphate + NADH + H(+). Its function is as follows. Catalyzes the NAD(H)-dependent interconversion of D-fructose 6-phosphate and D-mannitol 1-phosphate in the mannitol metabolic pathway. This is Mannitol-1-phosphate 5-dehydrogenase from Sclerotinia sclerotiorum (strain ATCC 18683 / 1980 / Ss-1) (White mold).